The following is a 132-amino-acid chain: Large ribosomal subunit protein uL14 (132 aa).

It belongs to the universal ribosomal protein uL14 family. Part of the 50S ribosomal subunit. Forms a cluster with proteins L3 and L24e, part of which may contact the 16S rRNA in 2 intersubunit bridges.

Its function is as follows. Binds to 23S rRNA. Forms part of two intersubunit bridges in the 70S ribosome. The protein is Large ribosomal subunit protein uL14 of Picrophilus torridus (strain ATCC 700027 / DSM 9790 / JCM 10055 / NBRC 100828 / KAW 2/3).